The primary structure comprises 122 residues: Large ribosomal subunit protein uL14 (122 aa).

This sequence belongs to the universal ribosomal protein uL14 family. As to quaternary structure, part of the 50S ribosomal subunit. Forms a cluster with proteins L3 and L19. In the 70S ribosome, L14 and L19 interact and together make contacts with the 16S rRNA in bridges B5 and B8.

Binds to 23S rRNA. Forms part of two intersubunit bridges in the 70S ribosome. The sequence is that of Large ribosomal subunit protein uL14 from Pseudomonas savastanoi pv. phaseolicola (strain 1448A / Race 6) (Pseudomonas syringae pv. phaseolicola (strain 1448A / Race 6)).